The chain runs to 124 residues: Large ribosomal subunit protein bL12 (124 aa).

The span at 101–115 shows a compositional bias: basic and acidic residues; that stretch reads ALSKDDAEKAKKELE. The segment at 101–124 is disordered; it reads ALSKDDAEKAKKELEEAGATVELK.

The protein belongs to the bacterial ribosomal protein bL12 family. Homodimer. Part of the ribosomal stalk of the 50S ribosomal subunit. Forms a multimeric L10(L12)X complex, where L10 forms an elongated spine to which 2 to 4 L12 dimers bind in a sequential fashion. Binds GTP-bound translation factors.

In terms of biological role, forms part of the ribosomal stalk which helps the ribosome interact with GTP-bound translation factors. Is thus essential for accurate translation. This chain is Large ribosomal subunit protein bL12, found in Hahella chejuensis (strain KCTC 2396).